We begin with the raw amino-acid sequence, 70 residues long: Peptide Hp1035 (70 aa).

The first 23 residues, 1-23 (MKTQFVILLVALVLFQMFAQSEA), serve as a signal peptide directing secretion. F36 is modified (phenylalanine amide). The propeptide occupies 40 to 70 (GLQDLDMDDLDQLFDGEISQADINFLNQLMR).

This sequence belongs to the non-disulfide-bridged peptide (NDBP) superfamily. Short antimicrobial peptide (group 4) family. As to expression, expressed by the venom gland.

It is found in the secreted. It localises to the target cell membrane. Its function is as follows. Amphipathic peptide with antimicrobial activity. This Heterometrus petersii (Asian forest scorpion) protein is Peptide Hp1035.